The primary structure comprises 300 residues: MQNNFHSGFVAILGRPNVGKSTFLNRVVGQKIAIMSDKAQTTRNKIQGIYTEDDAQIVFIDTPGIHKPHSRLGDFMVESALSTLNEVDAVLFMVNATQKRGRGDDFIIERLKNVKKPIYLVINKIDQIHPDKLLQIMDDYRNTLDYAEVFPISALEGNNCPELIESLVNTLPEGPQYYPADQITDHPERFIAGELIREKVLELTREEVPHSVAVVVDRIHREDAEKVLVQATIVVERNSQKGIIIGKGGKMLKQIGVKARKDIELMLGDKVYLELWVKVQPNWKDRQVDLQALGYKQDDY.

Residues 6–173 (HSGFVAILGR…IESLVNTLPE (168 aa)) enclose the Era-type G domain. A G1 region spans residues 14 to 21 (GRPNVGKS). GTP is bound at residue 14–21 (GRPNVGKS). The G2 stretch occupies residues 40-44 (QTTRN). The interval 61–64 (DTPG) is G3. GTP is bound by residues 61-65 (DTPGI) and 123-126 (NKID). A G4 region spans residues 123–126 (NKID). The G5 stretch occupies residues 152 to 154 (ISA). The KH type-2 domain occupies 204 to 281 (TREEVPHSVA…YLELWVKVQP (78 aa)).

The protein belongs to the TRAFAC class TrmE-Era-EngA-EngB-Septin-like GTPase superfamily. Era GTPase family. As to quaternary structure, monomer.

It localises to the cytoplasm. Its subcellular location is the cell membrane. Functionally, an essential GTPase that binds both GDP and GTP, with rapid nucleotide exchange. Plays a role in 16S rRNA processing and 30S ribosomal subunit biogenesis and possibly also in cell cycle regulation and energy metabolism. The sequence is that of GTPase Era from Ligilactobacillus salivarius (strain UCC118) (Lactobacillus salivarius).